We begin with the raw amino-acid sequence, 323 residues long: Cysteine synthase A (323 aa).

Residues N8 and R35 each contribute to the hydrogen sulfide site. An N6-(pyridoxal phosphate)lysine modification is found at K42. Residues N72 and 177 to 181 (GTGGT) contribute to the pyridoxal 5'-phosphate site. Residue L269 coordinates hydrogen sulfide. S273 is a binding site for pyridoxal 5'-phosphate.

Belongs to the cysteine synthase/cystathionine beta-synthase family. In terms of assembly, homodimer. It depends on pyridoxal 5'-phosphate as a cofactor.

It carries out the reaction O-acetyl-L-serine + hydrogen sulfide = L-cysteine + acetate. It functions in the pathway amino-acid biosynthesis; L-cysteine biosynthesis; L-cysteine from L-serine: step 2/2. Two cysteine synthase enzymes are found. Both catalyze the same reaction. Cysteine synthase B can also use thiosulfate in place of sulfide to give cysteine thiosulfonate as a product. The polypeptide is Cysteine synthase A (cysK) (Salmonella typhi).